The primary structure comprises 488 residues: Probable malate:quinone oxidoreductase (488 aa).

Belongs to the MQO family. It depends on FAD as a cofactor.

It carries out the reaction (S)-malate + a quinone = a quinol + oxaloacetate. It functions in the pathway carbohydrate metabolism; tricarboxylic acid cycle; oxaloacetate from (S)-malate (quinone route): step 1/1. This chain is Probable malate:quinone oxidoreductase, found in Neisseria meningitidis serogroup B (strain ATCC BAA-335 / MC58).